The primary structure comprises 232 residues: 7-cyano-7-deazaguanine synthase (232 aa).

7-17 (CSGGLDSVSLA) is an ATP binding site. 4 residues coordinate Zn(2+): C185, C193, C196, and C199.

It belongs to the QueC family. The cofactor is Zn(2+).

The enzyme catalyses 7-carboxy-7-deazaguanine + NH4(+) + ATP = 7-cyano-7-deazaguanine + ADP + phosphate + H2O + H(+). It participates in purine metabolism; 7-cyano-7-deazaguanine biosynthesis. Functionally, catalyzes the ATP-dependent conversion of 7-carboxy-7-deazaguanine (CDG) to 7-cyano-7-deazaguanine (preQ(0)). The chain is 7-cyano-7-deazaguanine synthase from Chelativorans sp. (strain BNC1).